A 111-amino-acid polypeptide reads, in one-letter code: Cytochrome c (111 aa).

A1 carries the post-translational modification N-acetylalanine. 3 residues coordinate heme c: C22, C25, and H26. K80 bears the N6,N6,N6-trimethyllysine mark. M88 provides a ligand contact to heme c. Position 94 is an N6,N6,N6-trimethyllysine (K94).

Belongs to the cytochrome c family. In terms of processing, binds 1 heme c group covalently per subunit.

It is found in the mitochondrion intermembrane space. Its function is as follows. Electron carrier protein. The oxidized form of the cytochrome c heme group can accept an electron from the heme group of the cytochrome c1 subunit of cytochrome reductase. Cytochrome c then transfers this electron to the cytochrome oxidase complex, the final protein carrier in the mitochondrial electron-transport chain. This chain is Cytochrome c, found in Cannabis sativa (Hemp).